Consider the following 250-residue polypeptide: MFRATCNTRDFKKVINATSNLVDEICFEVDENGIKASAMDPSHVALVSMEMPKDVFEEYEGDIQDIGIDLEALKKIIARGRGDEKLILDLDVEKNKLNITFKSNVTRKFSIALYDVSSSNLKVPDIEYPNSVSIKAGAFVEALKDAELVNDHITLKIDENKFVIYSKGDLNQSETVFDNSIDDDDNALADFNMGEASRSTFNLAYLKDLTKSTAAEDLLKIYLGSDMPVKIEYEVSGSKLVFLLAPRIES.

The protein belongs to the PCNA family. Homotrimer. The subunits circularize to form a toroid; DNA passes through its center. Replication factor C (RFC) is required to load the toroid on the DNA.

In terms of biological role, sliding clamp subunit that acts as a moving platform for DNA processing. Responsible for tethering the catalytic subunit of DNA polymerase and other proteins to DNA during high-speed replication. The polypeptide is DNA polymerase sliding clamp (Methanococcus maripaludis (strain DSM 14266 / JCM 13030 / NBRC 101832 / S2 / LL)).